Here is a 95-residue protein sequence, read N- to C-terminus: Aspartyl/glutamyl-tRNA(Asn/Gln) amidotransferase subunit C (95 aa).

It belongs to the GatC family. Heterotrimer of A, B and C subunits.

It catalyses the reaction L-glutamyl-tRNA(Gln) + L-glutamine + ATP + H2O = L-glutaminyl-tRNA(Gln) + L-glutamate + ADP + phosphate + H(+). It carries out the reaction L-aspartyl-tRNA(Asn) + L-glutamine + ATP + H2O = L-asparaginyl-tRNA(Asn) + L-glutamate + ADP + phosphate + 2 H(+). In terms of biological role, allows the formation of correctly charged Asn-tRNA(Asn) or Gln-tRNA(Gln) through the transamidation of misacylated Asp-tRNA(Asn) or Glu-tRNA(Gln) in organisms which lack either or both of asparaginyl-tRNA or glutaminyl-tRNA synthetases. The reaction takes place in the presence of glutamine and ATP through an activated phospho-Asp-tRNA(Asn) or phospho-Glu-tRNA(Gln). The protein is Aspartyl/glutamyl-tRNA(Asn/Gln) amidotransferase subunit C of Phenylobacterium zucineum (strain HLK1).